An 843-amino-acid chain; its full sequence is Axin-2 (843 aa).

A disordered region spans residues 1 to 75 (MSSAMLVTCL…EGRASPDSPL (75 aa)). Positions 21-30 (APRPPVPGEE) match the Tankyrase-binding motif motif. Residues 56–69 (RRNEDGLGEPEGRA) show a composition bias toward basic and acidic residues. The 120-residue stretch at 81–200 (SLHSLLGDQD…LTSDIYLEYV (120 aa)) folds into the RGS domain. The interaction with GSK3B stretch occupies residues 327-413 (VGSKKQLQRE…REGSELTLNS (87 aa)). The interaction with SIAH1 and SIAH2 stretch occupies residues 334 to 393 (QREMHRSVKANGQVSLPHFPRTHRLPKEMTPVEPATFAAELISRLEKLKLELESRHSLEE). Disordered stretches follow at residues 396–435 (QQIR…EEDP), 447–494 (LKTP…AASP), 561–674 (APET…RTTP), and 718–748 (ASQQ…EDHK). An interaction with beta-catenin region spans residues 413-476 (SREGAPTQHP…PDHHHHHHSQ (64 aa)). 2 stretches are compositionally biased toward low complexity: residues 477-494 (YHSL…AASP) and 588-597 (PGLALPAREG). Residues 727 to 741 (SATVQTGATPFSNPS) are compositionally biased toward polar residues. Residues 761 to 843 (ASELVVTYFF…RILGKVERID (83 aa)) enclose the DIX domain.

Interacts with glycogen synthase kinase-3 beta (GSK3B) and beta-catenin. The interaction between axin and beta-catenin occurs via the armadillo repeats contained in beta-catenin. Interacts with SMAD7 and RNF111. Interacts with ANKRD6. Interacts with SIAH1. Interacts with SIAH2. In terms of processing, probably phosphorylated by GSK3B and dephosphorylated by PP2A. ADP-ribosylated by tankyrase TNKS and TNKS2. Poly-ADP-ribosylated protein is recognized by RNF146, followed by ubiquitination and subsequent activation of the Wnt signaling pathway. Post-translationally, ubiquitinated by RNF146 when poly-ADP-ribosylated, leading to its degradation and subsequent activation of the Wnt signaling pathway. Deubiquitinated by USP34, deubiquitinated downstream of beta-catenin stabilization step: deubiquitination is important Wnt signaling to positively regulate beta-catenin (CTNBB1)-mediated transcription. As to expression, expressed in brain and lymphoblast.

It localises to the cytoplasm. Inhibitor of the Wnt signaling pathway. Down-regulates beta-catenin. Probably facilitate the phosphorylation of beta-catenin and APC by GSK3B. In Homo sapiens (Human), this protein is Axin-2 (AXIN2).